Reading from the N-terminus, the 572-residue chain is Arginine--tRNA ligase (572 aa).

A 'HIGH' region motif is present at residues 122 to 132; sequence PNLAKEMHVGH.

The protein belongs to the class-I aminoacyl-tRNA synthetase family. In terms of assembly, monomer.

Its subcellular location is the cytoplasm. It carries out the reaction tRNA(Arg) + L-arginine + ATP = L-arginyl-tRNA(Arg) + AMP + diphosphate. The sequence is that of Arginine--tRNA ligase from Neisseria meningitidis serogroup A / serotype 4A (strain DSM 15465 / Z2491).